Here is a 191-residue protein sequence, read N- to C-terminus: Thymidine kinase (191 aa).

ATP is bound by residues 15-22 (GPMYSGKT) and 88-91 (DEAQ). Residue E89 is the Proton acceptor of the active site. Zn(2+) contacts are provided by C145, C148, C183, and C186.

It belongs to the thymidine kinase family. As to quaternary structure, homotetramer.

It localises to the cytoplasm. It carries out the reaction thymidine + ATP = dTMP + ADP + H(+). The polypeptide is Thymidine kinase (Clostridium botulinum (strain Hall / ATCC 3502 / NCTC 13319 / Type A)).